A 281-amino-acid polypeptide reads, in one-letter code: Shikimate dehydrogenase (NADP(+)) (281 aa).

Shikimate-binding positions include 14–16 and T61; that span reads SRS. K65 serves as the catalytic Proton acceptor. Positions 86 and 101 each coordinate shikimate. NADP(+)-binding positions include 127 to 131, 151 to 156, and V216; these read GAGGA and NRTLAR. Shikimate is bound at residue Y218. G239 contacts NADP(+).

This sequence belongs to the shikimate dehydrogenase family. As to quaternary structure, homodimer.

The enzyme catalyses shikimate + NADP(+) = 3-dehydroshikimate + NADPH + H(+). It participates in metabolic intermediate biosynthesis; chorismate biosynthesis; chorismate from D-erythrose 4-phosphate and phosphoenolpyruvate: step 4/7. Involved in the biosynthesis of the chorismate, which leads to the biosynthesis of aromatic amino acids. Catalyzes the reversible NADPH linked reduction of 3-dehydroshikimate (DHSA) to yield shikimate (SA). The polypeptide is Shikimate dehydrogenase (NADP(+)) (Azorhizobium caulinodans (strain ATCC 43989 / DSM 5975 / JCM 20966 / LMG 6465 / NBRC 14845 / NCIMB 13405 / ORS 571)).